The sequence spans 98 residues: NADH-ubiquinone oxidoreductase chain 4L (98 aa).

The next 3 helical transmembrane spans lie at methionine 1–phenylalanine 21, isoleucine 26–leucine 46, and leucine 61–leucine 81.

The protein belongs to the complex I subunit 4L family.

The protein localises to the mitochondrion membrane. The enzyme catalyses a ubiquinone + NADH + 5 H(+)(in) = a ubiquinol + NAD(+) + 4 H(+)(out). Its function is as follows. Core subunit of the mitochondrial membrane respiratory chain NADH dehydrogenase (Complex I) that is believed to belong to the minimal assembly required for catalysis. Complex I functions in the transfer of electrons from NADH to the respiratory chain. The immediate electron acceptor for the enzyme is believed to be ubiquinone. The sequence is that of NADH-ubiquinone oxidoreductase chain 4L (nad4L) from Dictyostelium citrinum (Slime mold).